The following is a 935-amino-acid chain: Dual 3',5'-cyclic-AMP and -GMP phosphodiesterase 11A (935 aa).

Positions 41–125 (RHSSGQGASD…ASQKELRKSF (85 aa)) are disordered. A compositionally biased stretch (low complexity) spans 54-69 (ALAGASSLAQSSARGS). Residues Ser162, Ser163, and Ser239 each carry the phosphoserine modification. GAF domains follow at residues 217–370 (DLTS…GIAI) and 402–558 (DLEK…GLGI). Ser424 is a 3',5'-cyclic GMP binding site. In terms of domain architecture, PDEase spans 588–912 (SKAEVDKFKA…RKWEELHQKR (325 aa)). His664 (proton donor) is an active-site residue. A divalent metal cation is bound by residues His668, His704, Asp705, and Asp816. The tract at residues 915-935 (VSAASPVPSSPSPAVAGEDRL) is disordered.

Belongs to the cyclic nucleotide phosphodiesterase family. A divalent metal cation is required as a cofactor. Isoform 1 is expressed in brain, heart, kidney and liver, but not in prostate. Isoform 2 is specifically expressed in testis. Isoform 3 is expressed in various tissues including brain, lung, skeletal muscle, spleen, testis and prostate.

The protein localises to the cytoplasm. It is found in the cytosol. The catalysed reaction is 3',5'-cyclic GMP + H2O = GMP + H(+). It carries out the reaction 3',5'-cyclic AMP + H2O = AMP + H(+). With respect to regulation, inhibited by 3-isobutyl-1-methylxanthine (IBMX), zaprinast and dipyridamole. cGMP acts as an allosteric activator. Its function is as follows. Plays a role in signal transduction by regulating the intracellular concentration of cyclic nucleotides cAMP and cGMP. Catalyzes the hydrolysis of both cAMP and cGMP to 5'-AMP and 5'-GMP, respectively. This chain is Dual 3',5'-cyclic-AMP and -GMP phosphodiesterase 11A, found in Rattus norvegicus (Rat).